The following is a 266-amino-acid chain: Putative carbamate hydrolase RutD (266 aa).

The 106-residue stretch at Pro-14–Pro-119 folds into the AB hydrolase-1 domain.

This sequence belongs to the AB hydrolase superfamily. Hydrolase RutD family.

The catalysed reaction is carbamate + 2 H(+) = NH4(+) + CO2. Its function is as follows. Involved in pyrimidine catabolism. May facilitate the hydrolysis of carbamate, a reaction that can also occur spontaneously. The chain is Putative carbamate hydrolase RutD from Klebsiella pneumoniae subsp. pneumoniae (strain ATCC 700721 / MGH 78578).